The sequence spans 345 residues: Nuclear distribution protein nudE-like 1 (345 aa).

Positions 28 to 190 form a coiled coil; that stretch reads QSFQEARDEL…LAVRERQQEV (163 aa). Positions 56–166 are self-association; it reads VQAEQRNRDL…LDEKESLLVS (111 aa). An interaction with KATNB1 region spans residues 64–189; sequence DLQADNQRLK…ELAVRERQQE (126 aa). The tract at residues 114–133 is required for interaction with PAFAH1B1; that stretch reads YVRELEQANDDLERAKRATI. The tract at residues 175 to 345 is interaction with CENPF; it reads RDLRQELAVR…SAPGMLPLSV (171 aa). The tract at residues 189–256 is interaction with YWHAE; it reads EVTRKSAPSS…SARISALNIV (68 aa). The interaction with NEFL stretch occupies residues 191 to 345; that stretch reads TRKSAPSSPT…SAPGMLPLSV (155 aa). An interaction with KATNA1 region spans residues 195–256; that stretch reads APSSPTLDCE…SARISALNIV (62 aa). Ser215 bears the Phosphoserine mark. Thr219 is subject to Phosphothreonine; by CDK1 and MAPK1. The residue at position 231 (Ser231) is a Phosphoserine. The tract at residues 241 to 280 is interaction with DISC1; the sequence is TSPLTPSARISALNIVGDLLRKVGALESKLAACRNFAKDQ. Phosphoserine; by CDK1 is present on Ser242. A Phosphothreonine; by CDK1 and MAPK1 modification is found at Thr245. A required for localization to the centrosome and interaction with dynein, dynactin, tubulin gamma, PCM1 and PCNT region spans residues 256-291; that stretch reads VGDLLRKVGALESKLAACRNFAKDQASRKSYISGNV. Cys273 carries S-palmitoyl cysteine; by ZDHHC2, ZDHHC3 and ZDHHC7 lipidation. The tract at residues 315-345 is disordered; sequence GAVNGFDPAPPPPGLGSSRPSSAPGMLPLSV. Residues 329 to 339 show a composition bias toward low complexity; the sequence is LGSSRPSSAPG. The residue at position 344 (Ser344) is a Phosphoserine.

The protein belongs to the nudE family. As to quaternary structure, interacts with PLEKHM1 (via N- and C-terminus). Interacts with YWHAE. Interacts directly with NEFL and indirectly with NEFH. Interacts with microtubules. Self-associates. Interacts with DISC1, dynein, dynactin, tubulin gamma, KATNA1, KATNB1, PAFAH1B1, PCM1 and PCNT. Interacts (via C-terminus) with CENPF. Interacts with ZNF365. Interacts with GTP-bound RAB9A; the interaction may lead to RAB9A-dynein motor tethering. Post-translationally, phosphorylated in mitosis. Can be phosphorylated by CDK1, CDK5 and MAPK1. Phosphorylation by CDK5 promotes interaction with KATNA1 and YWHAE. In terms of processing, palmitoylation at Cys-273 reduces affinity for dynein. As to expression, expressed in brain, heart, kidney, liver, lung, pancreas, placenta and skeletal muscle.

The protein resides in the cytoplasm. Its subcellular location is the cytoskeleton. The protein localises to the microtubule organizing center. It localises to the centrosome. It is found in the chromosome. The protein resides in the centromere. Its subcellular location is the kinetochore. The protein localises to the spindle. Functionally, required for organization of the cellular microtubule array and microtubule anchoring at the centrosome. May regulate microtubule organization at least in part by targeting the microtubule severing protein KATNA1 to the centrosome. Also positively regulates the activity of the minus-end directed microtubule motor protein dynein. May enhance dynein-mediated microtubule sliding by targeting dynein to the microtubule plus ends. Required for several dynein- and microtubule-dependent processes such as the maintenance of Golgi integrity, the centripetal motion of secretory vesicles and the coupling of the nucleus and centrosome. Also required during brain development for the migration of newly formed neurons from the ventricular/subventricular zone toward the cortical plate. Plays a role, together with DISC1, in the regulation of neurite outgrowth. Required for mitosis in some cell types but appears to be dispensible for mitosis in cortical neuronal progenitors, which instead requires NDE1. Facilitates the polymerization of neurofilaments from the individual subunits NEFH and NEFL. Positively regulates lysosome peripheral distribution and ruffled border formation in osteoclasts. Plays a role, together with DISC1, in the regulation of neurite outgrowth. May act as a RAB9A/B effector that tethers RAB9-associated late endosomes to the dynein motor for their retrograde transport to the trans-Golgi network. This chain is Nuclear distribution protein nudE-like 1 (NDEL1), found in Homo sapiens (Human).